Consider the following 464-residue polypeptide: L-cystine uptake protein TcyP (464 aa).

Helical transmembrane passes span 3 to 23 (TLLVGINVAVMLILVGVLYYM), 34 to 54 (VFTALGVGIIFGLILQFIYEP), 73 to 93 (YVKLLQMIVMPLILVSIISAF), 107 to 127 (GLIIGILILTTGIAAAVGIAA), 184 to 204 (PTSTISVVIFAAFIGIAFIGV), 225 to 245 (IVMRMVTLILRLTPYGVLALM), 263 to 283 (FVLASYVALIVMFVIHLLLIA), 347 to 367 (AGIYPAMLAMMVAPTVGIDPL), 371 to 391 (FILTLIAVVAISSFGVAGVGG), and 395 to 415 (FAALIVLSTMNLPIGIVALVI).

It belongs to the dicarboxylate/amino acid:cation symporter (DAACS) (TC 2.A.23) family.

Its subcellular location is the membrane. Functionally, mediates uptake of L-cystine, the oxidized form of L-cysteine. This is L-cystine uptake protein TcyP from Bacillus thuringiensis subsp. konkukian (strain 97-27).